The primary structure comprises 253 residues: MKTLISNSKKVLIPLIMGSIFAGNVMAAGPYAVELGEAGTFTILSKSGITDVYPSTVTGNVGTSPITGAALLLNCDEVTGAMYTVDSAGPLPCSINSPYLLELAVSDMGIAYNDAAGRVPADHTELGTGEIGGLTLEPGVYKWSSDVNISTDVTFNGTMDDVWIMQISGNLNQANAKRVTLTGGALAKNIFWQVAGYTALGTYASFEGIVLSKTLISVNTGTTVNGRLLAQTAVTLQKNTINAPTEQYEEAPL.

The first 27 residues, 1–27 (MKTLISNSKKVLIPLIMGSIFAGNVMA), serve as a signal peptide directing secretion. A disulfide bridge links Cys75 with Cys93. Short sequence motifs (ice-binding site motif (T-A/G-X-T/N)) lie at residues 220-223 (TGTT) and 232-235 (TAVT).

Belongs to the ice-binding protein family.

It is found in the secreted. In terms of biological role, binds to the surface of ice crystals and inhibits their growth. Has ice recrystallization inhibition (RI) activity (the ability to prevent the formation of larger grains of ice at the expense of smaller grains), which may protect membranes from freezing injury. Has high thermal hysteresis (TH) activity, which is the ability to lower the freezing point of an aqueous solution below its melting point, and thus the freezing of the cell fluid can be prevented protecting the organism from ice damage. The TH activity of this protein is 3.8 degrees Celsius at 14 mM. The sequence is that of Ice-binding protein from Colwellia sp.